The chain runs to 565 residues: Hemagglutinin-neuraminidase (565 aa).

Residues 1-19 are Intravirion-facing; that stretch reads MVAEDAPVRATCRVLFRTT. Residues 20-40 traverse the membrane as a helical segment; that stretch reads TLIFLCTLLALSISILYESLI. Topologically, residues 41–565 are virion surface; that stretch reads TQKQIMSQAG…VPFIRQVTLS (525 aa). Residue Asn-139 is glycosylated (N-linked (GlcNAc...) asparagine; by host). Intrachain disulfides connect Cys-161-Cys-185, Cys-175-Cys-236, and Cys-227-Cys-240. Residues 223–228 are involved in neuraminidase activity; sequence NRKSCS. Asn-267 is a glycosylation site (N-linked (GlcNAc...) asparagine; by host). 3 disulfides stabilise this stretch: Cys-333–Cys-454, Cys-365–Cys-375, and Cys-448–Cys-458. N-linked (GlcNAc...) asparagine; by host glycosylation is present at Asn-504. Cysteines 528 and 539 form a disulfide.

The protein belongs to the paramyxoviruses hemagglutinin-neuraminidase family. In terms of assembly, homotetramer; composed of disulfide-linked homodimers. Interacts with F protein trimer.

Its subcellular location is the virion membrane. It localises to the host cell membrane. It catalyses the reaction Hydrolysis of alpha-(2-&gt;3)-, alpha-(2-&gt;6)-, alpha-(2-&gt;8)- glycosidic linkages of terminal sialic acid residues in oligosaccharides, glycoproteins, glycolipids, colominic acid and synthetic substrates.. Functionally, attaches the virus to sialic acid-containing cell receptors and thereby initiating infection. Binding of HN protein to the receptor induces a conformational change that allows the F protein to trigger virion/cell membranes fusion. In terms of biological role, neuraminidase activity ensures the efficient spread of the virus by dissociating the mature virions from the neuraminic acid containing glycoproteins. This is Hemagglutinin-neuraminidase (HN) from Canis lupus familiaris (Dog).